A 390-amino-acid chain; its full sequence is Alanine racemase (390 aa).

Lys-37 functions as the Proton acceptor; specific for D-alanine in the catalytic mechanism. Residue Lys-37 is modified to N6-(pyridoxal phosphate)lysine. Arg-135 is a substrate binding site. Tyr-274 acts as the Proton acceptor; specific for L-alanine in catalysis. A substrate-binding site is contributed by Met-322.

Belongs to the alanine racemase family. It depends on pyridoxal 5'-phosphate as a cofactor.

The catalysed reaction is L-alanine = D-alanine. The protein operates within amino-acid biosynthesis; D-alanine biosynthesis; D-alanine from L-alanine: step 1/1. Functionally, catalyzes the interconversion of L-alanine and D-alanine. May also act on other amino acids. The protein is Alanine racemase (alr) of Desulfosudis oleivorans (strain DSM 6200 / JCM 39069 / Hxd3) (Desulfococcus oleovorans).